The following is a 272-amino-acid chain: Type III pantothenate kinase (272 aa).

Position 6–13 (6–13) interacts with ATP; it reads NVNNTNTL. 113 to 116 provides a ligand contact to substrate; it reads GADR. Residue aspartate 115 is the Proton acceptor of the active site. Residue aspartate 135 participates in K(+) binding. Residue threonine 138 coordinates ATP. Threonine 190 is a binding site for substrate.

It belongs to the type III pantothenate kinase family. Homodimer. NH4(+) serves as cofactor. Requires K(+) as cofactor.

Its subcellular location is the cytoplasm. The enzyme catalyses (R)-pantothenate + ATP = (R)-4'-phosphopantothenate + ADP + H(+). The protein operates within cofactor biosynthesis; coenzyme A biosynthesis; CoA from (R)-pantothenate: step 1/5. Its function is as follows. Catalyzes the phosphorylation of pantothenate (Pan), the first step in CoA biosynthesis. This Acidobacterium capsulatum (strain ATCC 51196 / DSM 11244 / BCRC 80197 / JCM 7670 / NBRC 15755 / NCIMB 13165 / 161) protein is Type III pantothenate kinase.